Consider the following 363-residue polypeptide: Alanine racemase (363 aa).

The Proton acceptor; specific for D-alanine role is filled by Lys39. An N6-(pyridoxal phosphate)lysine modification is found at Lys39. Arg134 is a substrate binding site. The active-site Proton acceptor; specific for L-alanine is Tyr251. Met299 contributes to the substrate binding site.

This sequence belongs to the alanine racemase family. Pyridoxal 5'-phosphate serves as cofactor.

It catalyses the reaction L-alanine = D-alanine. The protein operates within amino-acid biosynthesis; D-alanine biosynthesis; D-alanine from L-alanine: step 1/1. Its function is as follows. Catalyzes the interconversion of L-alanine and D-alanine. May also act on other amino acids. This Thermodesulfovibrio yellowstonii (strain ATCC 51303 / DSM 11347 / YP87) protein is Alanine racemase (alr).